Here is a 764-residue protein sequence, read N- to C-terminus: Phosphoribosylformylglycinamidine synthase subunit PurL (764 aa).

His57 is a catalytic residue. ATP-binding residues include Tyr60 and Lys104. Residue Glu106 coordinates Mg(2+). Residues 107-110 (SHNH) and Arg129 each bind substrate. Catalysis depends on His108, which acts as the Proton acceptor. Asp130 is a binding site for Mg(2+). Gln258 serves as a coordination point for substrate. Asp286 is a binding site for Mg(2+). Substrate is bound at residue 330–332 (ESQ). ATP is bound by residues Asn518 and Gly555. Asn556 is a binding site for Mg(2+). Ser558 is a binding site for substrate.

It belongs to the FGAMS family. As to quaternary structure, monomer. Part of the FGAM synthase complex composed of 1 PurL, 1 PurQ and 2 PurS subunits.

The protein resides in the cytoplasm. It catalyses the reaction N(2)-formyl-N(1)-(5-phospho-beta-D-ribosyl)glycinamide + L-glutamine + ATP + H2O = 2-formamido-N(1)-(5-O-phospho-beta-D-ribosyl)acetamidine + L-glutamate + ADP + phosphate + H(+). It functions in the pathway purine metabolism; IMP biosynthesis via de novo pathway; 5-amino-1-(5-phospho-D-ribosyl)imidazole from N(2)-formyl-N(1)-(5-phospho-D-ribosyl)glycinamide: step 1/2. Functionally, part of the phosphoribosylformylglycinamidine synthase complex involved in the purines biosynthetic pathway. Catalyzes the ATP-dependent conversion of formylglycinamide ribonucleotide (FGAR) and glutamine to yield formylglycinamidine ribonucleotide (FGAM) and glutamate. The FGAM synthase complex is composed of three subunits. PurQ produces an ammonia molecule by converting glutamine to glutamate. PurL transfers the ammonia molecule to FGAR to form FGAM in an ATP-dependent manner. PurS interacts with PurQ and PurL and is thought to assist in the transfer of the ammonia molecule from PurQ to PurL. The polypeptide is Phosphoribosylformylglycinamidine synthase subunit PurL (Nocardia farcinica (strain IFM 10152)).